Here is a 34-residue protein sequence, read N- to C-terminus: Tau-theraphotoxin-Pc1c (34 aa).

Cystine bridges form between cysteine 2/cysteine 16, cysteine 9/cysteine 21, and cysteine 15/cysteine 28. Phenylalanine 34 carries the phenylalanine amide modification.

Belongs to the neurotoxin 10 (Hwtx-1) family. 62 (Vatx) subfamily. Expressed by the venom gland.

It localises to the secreted. Selectively activates mammalian TRPV1, or capsaicin receptor, a non-selective cation channel expressed by sensory neurons of the pain pathway. Is more potent than VaTx1 and VaTx2. Interacts with distinct regions of the channel than capsaicin, since it only acts on the extracellular face of the channel, and capsaicin binds to the cytosolic side. Also activates avian TRPV1, which is insensitive to capsaicin. In mice, elicits pain-related behaviors, such as licking and flinching of the affected limb. The paw of toxin-injected mice shows substantial edema. In Psalmopoeus cambridgei (Trinidad chevron tarantula), this protein is Tau-theraphotoxin-Pc1c.